A 503-amino-acid chain; its full sequence is MSRDATLPVRGRVAELKLDKKLPKNIDAVVVALFTGEGDSPQLAGGNQLNAIFTNKQQSAILRQLEAVGAKGKANEITRVPGVEDVAPVVAVGLGSAEELDDEKLRRATGTVARSLSGFENVATTIGELGLSAAVTGFGLGSYSFKGLRRAGDDAAEEGVDKPLTVHFIGGDKDEFVAAQITVDAVVLARDLVNTPSSHLYPESYAVIAANEASRYGLKTEILDENQLATDGFGGILAVGNGSSRKPRLLRLTWKHRKASKHVALVGKGVTFDTGGISLKPGANMDNMISDMGGSAAMIATIIAAARLNLKVNITATIPMAENMPSGDAFRPGDVITHYGGLTSEILNTDAEGRLILADAMALASKDNPDYLIDAATLTGAQLVSLGLRTSGVMGTDEFRDTVATTGRSVGEQAWAMPLPEELDEEIKSPVADLRNVTNSRFAGMAAAGRYLQEFVGEGIEWAHVDIAGPAYNTASPYGYTPKRATGQPVRTFIQVLQDIAER.

Residues K268 and D273 each coordinate Mn(2+). K280 is a catalytic residue. Positions 291, 350, and 352 each coordinate Mn(2+). Residue R354 is part of the active site.

The protein belongs to the peptidase M17 family. The cofactor is Mn(2+).

The protein resides in the cytoplasm. It carries out the reaction Release of an N-terminal amino acid, Xaa-|-Yaa-, in which Xaa is preferably Leu, but may be other amino acids including Pro although not Arg or Lys, and Yaa may be Pro. Amino acid amides and methyl esters are also readily hydrolyzed, but rates on arylamides are exceedingly low.. The catalysed reaction is Release of an N-terminal amino acid, preferentially leucine, but not glutamic or aspartic acids.. Its function is as follows. Presumably involved in the processing and regular turnover of intracellular proteins. Catalyzes the removal of unsubstituted N-terminal amino acids from various peptides. In Corynebacterium efficiens (strain DSM 44549 / YS-314 / AJ 12310 / JCM 11189 / NBRC 100395), this protein is Probable cytosol aminopeptidase.